Here is a 615-residue protein sequence, read N- to C-terminus: UvrABC system protein C (615 aa).

A GIY-YIG domain is found at 12–91 (EKPGVYIMKD…IKKYKPKYNV (80 aa)). The UVR domain occupies 203-238 (DWLIQKLKEDMKKAAEELRFEEAARIRDQIFAIERT).

It belongs to the UvrC family. In terms of assembly, interacts with UvrB in an incision complex.

The protein localises to the cytoplasm. In terms of biological role, the UvrABC repair system catalyzes the recognition and processing of DNA lesions. UvrC both incises the 5' and 3' sides of the lesion. The N-terminal half is responsible for the 3' incision and the C-terminal half is responsible for the 5' incision. The sequence is that of UvrABC system protein C from Thermoanaerobacter sp. (strain X514).